The chain runs to 373 residues: Putative glutamate--cysteine ligase 2-1 (373 aa).

Belongs to the glutamate--cysteine ligase type 2 family. YbdK subfamily.

The enzyme catalyses L-cysteine + L-glutamate + ATP = gamma-L-glutamyl-L-cysteine + ADP + phosphate + H(+). In terms of biological role, ATP-dependent carboxylate-amine ligase which exhibits weak glutamate--cysteine ligase activity. The chain is Putative glutamate--cysteine ligase 2-1 from Legionella pneumophila (strain Paris).